A 640-amino-acid chain; its full sequence is Threonine--tRNA ligase (640 aa).

Residues 1–59 (MKIKVKLPDGKEKEYDRGITPAEIAKELGVKKAIGAVVNGELWDLKRPIENDCELRLVT) form the TGS domain. The tract at residues 240–531 (DHRKLGPHLE…LIEHFAGAFP (292 aa)) is catalytic. Cysteine 332, histidine 383, and histidine 508 together coordinate Zn(2+).

The protein belongs to the class-II aminoacyl-tRNA synthetase family. Homodimer. Requires Zn(2+) as cofactor.

It localises to the cytoplasm. It carries out the reaction tRNA(Thr) + L-threonine + ATP = L-threonyl-tRNA(Thr) + AMP + diphosphate + H(+). Its function is as follows. Catalyzes the attachment of threonine to tRNA(Thr) in a two-step reaction: L-threonine is first activated by ATP to form Thr-AMP and then transferred to the acceptor end of tRNA(Thr). Also edits incorrectly charged L-seryl-tRNA(Thr). The sequence is that of Threonine--tRNA ligase from Thermotoga sp. (strain RQ2).